The chain runs to 149 residues: Nucleoside diphosphate kinase (149 aa).

ATP-binding residues include lysine 9, phenylalanine 57, arginine 85, threonine 91, arginine 102, and asparagine 112. Histidine 115 acts as the Pros-phosphohistidine intermediate in catalysis.

It belongs to the NDK family. Homotetramer. Requires Mg(2+) as cofactor.

The protein resides in the cytoplasm. It catalyses the reaction a 2'-deoxyribonucleoside 5'-diphosphate + ATP = a 2'-deoxyribonucleoside 5'-triphosphate + ADP. The catalysed reaction is a ribonucleoside 5'-diphosphate + ATP = a ribonucleoside 5'-triphosphate + ADP. Its function is as follows. Major role in the synthesis of nucleoside triphosphates other than ATP. The ATP gamma phosphate is transferred to the NDP beta phosphate via a ping-pong mechanism, using a phosphorylated active-site intermediate. In Microcystis aeruginosa (strain NIES-843 / IAM M-2473), this protein is Nucleoside diphosphate kinase.